The sequence spans 316 residues: Ribosomal protein L11 methyltransferase (316 aa).

The S-adenosyl-L-methionine site is built by threonine 157, glycine 178, aspartate 200, and asparagine 243.

This sequence belongs to the methyltransferase superfamily. PrmA family.

Its subcellular location is the cytoplasm. It catalyses the reaction L-lysyl-[protein] + 3 S-adenosyl-L-methionine = N(6),N(6),N(6)-trimethyl-L-lysyl-[protein] + 3 S-adenosyl-L-homocysteine + 3 H(+). Its function is as follows. Methylates ribosomal protein L11. The polypeptide is Ribosomal protein L11 methyltransferase (Streptococcus pneumoniae (strain 70585)).